The chain runs to 210 residues: Na(+)-translocating NADH-quinone reductase subunit D (210 aa).

The next 6 helical transmembrane spans lie at 10–30 (ILFAPFLDNNPIALQVLGVCS), 42–62 (FVMTLAVMFVTAFSNLFVSLI), 72–92 (IIVQMAIIASLVIVVDQVLKA), 103–123 (VFVGLIITNCIVMGRAEAYAM), 131–151 (FIDGVGNGLGYGFVLITVAFF), and 178–198 (NGLMLLAPSAFFLIGFMIWAI).

Belongs to the NqrDE/RnfAE family. In terms of assembly, composed of six subunits; NqrA, NqrB, NqrC, NqrD, NqrE and NqrF.

It localises to the cell inner membrane. The enzyme catalyses a ubiquinone + n Na(+)(in) + NADH + H(+) = a ubiquinol + n Na(+)(out) + NAD(+). Its function is as follows. NQR complex catalyzes the reduction of ubiquinone-1 to ubiquinol by two successive reactions, coupled with the transport of Na(+) ions from the cytoplasm to the periplasm. NqrA to NqrE are probably involved in the second step, the conversion of ubisemiquinone to ubiquinol. This Photobacterium profundum (strain SS9) protein is Na(+)-translocating NADH-quinone reductase subunit D.